The sequence spans 357 residues: uncharacterized protein (357 aa).

Residues 6 to 32 (CIVCRQKKIKCDRKNPCTNCEQAGEKC) constitute a DNA-binding region (zn(2)-C6 fungal-type).

The protein localises to the nucleus. This is an uncharacterized protein from Schizosaccharomyces pombe (strain 972 / ATCC 24843) (Fission yeast).